Here is a 334-residue protein sequence, read N- to C-terminus: Rhomboid-like protein 14, mitochondrial (334 aa).

The N-terminal 87 residues, 1–87 (MENFGEGRRS…RLFLSAFYHV (87 aa)), are a transit peptide targeting the mitochondrion. The next 4 helical transmembrane spans lie at 114-134 (EFAS…LLLA), 146-166 (AYYN…KVVL), 176-196 (VYGI…LVQM), and 197-217 (FVPN…IIYL). The Nucleophile role is filled by serine 156. The active-site Charge relay system is the histidine 206. The RanBP2-type zinc finger occupies 273–302 (GPGIWRCQSCTYDNSGWLSACEMCGSGRAR).

Belongs to the peptidase S54 family.

Its subcellular location is the mitochondrion membrane. Probable rhomboid-type serine protease that catalyzes intramembrane proteolysis. May function in the heat-shock response pathway. The polypeptide is Rhomboid-like protein 14, mitochondrial (Arabidopsis thaliana (Mouse-ear cress)).